A 946-amino-acid chain; its full sequence is Bifunctional glutamine synthetase adenylyltransferase/adenylyl-removing enzyme (946 aa).

The tract at residues 1 to 440 (MKPLSSPLQQ…VFNELIGDDE (440 aa)) is adenylyl removase. Positions 449–946 (SEQWRELWQD…ASWQKWLVEE (498 aa)) are adenylyl transferase.

It belongs to the GlnE family. Requires Mg(2+) as cofactor.

It carries out the reaction [glutamine synthetase]-O(4)-(5'-adenylyl)-L-tyrosine + phosphate = [glutamine synthetase]-L-tyrosine + ADP. The catalysed reaction is [glutamine synthetase]-L-tyrosine + ATP = [glutamine synthetase]-O(4)-(5'-adenylyl)-L-tyrosine + diphosphate. Functionally, involved in the regulation of glutamine synthetase GlnA, a key enzyme in the process to assimilate ammonia. When cellular nitrogen levels are high, the C-terminal adenylyl transferase (AT) inactivates GlnA by covalent transfer of an adenylyl group from ATP to specific tyrosine residue of GlnA, thus reducing its activity. Conversely, when nitrogen levels are low, the N-terminal adenylyl removase (AR) activates GlnA by removing the adenylyl group by phosphorolysis, increasing its activity. The regulatory region of GlnE binds the signal transduction protein PII (GlnB) which indicates the nitrogen status of the cell. The chain is Bifunctional glutamine synthetase adenylyltransferase/adenylyl-removing enzyme from Shigella flexneri.